The primary structure comprises 210 residues: MELQLAIDLLNKEDAAELANKVKDYVDIVEIGTPIIYNEGLPAVKHMADNISNVKVLADMKIMDAADYEVSQAIKFGADVITILGVAEDASIKAAIEEAHKNNKQLLVDMIAVQDLEKRAKELDEMGADYIAVHTGYDLQAEGQSPLESLRTVKSVIKNSKVAVAGGIKPDTIKDIVAESPDLVIVGGGIANADDPVEAAKQCRAAIEGK.

The protein belongs to the HPS/KGPDC family. HPS subfamily.

It carries out the reaction D-ribulose 5-phosphate + formaldehyde = D-arabino-hex-3-ulose 6-phosphate. The protein operates within one-carbon metabolism; formaldehyde assimilation via RuMP pathway; D-fructose 6-phosphate from D-ribulose 5-phosphate and formaldehyde: step 1/2. Its function is as follows. Catalyzes the condensation of ribulose 5-phosphate with formaldehyde to form 3-hexulose 6-phosphate. This is 3-hexulose-6-phosphate synthase from Staphylococcus aureus (strain NCTC 8325 / PS 47).